The following is a 296-amino-acid chain: tRNA dimethylallyltransferase (296 aa).

2 to 9 (GPTASGKT) lines the ATP pocket. 4-9 (TASGKT) contacts substrate. Interaction with substrate tRNA regions lie at residues 27–30 (DSAL), 151–155 (QRLAR), and 232–237 (RCVGYR).

The protein belongs to the IPP transferase family. In terms of assembly, monomer. Requires Mg(2+) as cofactor.

The enzyme catalyses adenosine(37) in tRNA + dimethylallyl diphosphate = N(6)-dimethylallyladenosine(37) in tRNA + diphosphate. In terms of biological role, catalyzes the transfer of a dimethylallyl group onto the adenine at position 37 in tRNAs that read codons beginning with uridine, leading to the formation of N6-(dimethylallyl)adenosine (i(6)A). This is tRNA dimethylallyltransferase from Shewanella pealeana (strain ATCC 700345 / ANG-SQ1).